A 434-amino-acid chain; its full sequence is Alpha-enolase (434 aa).

Serine 40 is a binding site for Mg(2+). Histidine 158 and glutamate 167 together coordinate substrate. The Proton donor role is filled by glutamate 210. Residues aspartate 245, glutamate 293, and aspartate 318 each contribute to the Mg(2+) site. 2 residues coordinate substrate: glutamate 293 and aspartate 318. Lysine 343 serves as the catalytic Proton acceptor. Residues serine 370–serine 373 and lysine 394 each bind substrate.

The protein belongs to the enolase family. Homodimer. Mg(2+) is required as a cofactor.

It localises to the cytoplasm. The catalysed reaction is (2R)-2-phosphoglycerate = phosphoenolpyruvate + H2O. It participates in carbohydrate degradation; glycolysis; pyruvate from D-glyceraldehyde 3-phosphate: step 4/5. This Gallus gallus (Chicken) protein is Alpha-enolase (ENO1).